A 124-amino-acid chain; its full sequence is NAD(P)H-quinone oxidoreductase subunit 5, chloroplastic (124 aa).

The next 3 helical transmembrane spans lie at 22–42, 44–64, and 91–111; these read TPIS…FLVA, LLPL…IGII, and LGYM…FHLI.

Belongs to the complex I subunit 5 family. In terms of assembly, NDH is composed of at least 16 different subunits, 5 of which are encoded in the nucleus.

The protein localises to the plastid. Its subcellular location is the chloroplast thylakoid membrane. It catalyses the reaction a plastoquinone + NADH + (n+1) H(+)(in) = a plastoquinol + NAD(+) + n H(+)(out). The catalysed reaction is a plastoquinone + NADPH + (n+1) H(+)(in) = a plastoquinol + NADP(+) + n H(+)(out). In terms of biological role, NDH shuttles electrons from NAD(P)H:plastoquinone, via FMN and iron-sulfur (Fe-S) centers, to quinones in the photosynthetic chain and possibly in a chloroplast respiratory chain. The immediate electron acceptor for the enzyme in this species is believed to be plastoquinone. Couples the redox reaction to proton translocation, and thus conserves the redox energy in a proton gradient. In Pisum sativum (Garden pea), this protein is NAD(P)H-quinone oxidoreductase subunit 5, chloroplastic (ndhF).